Reading from the N-terminus, the 873-residue chain is Actin-related protein 8 (873 aa).

The disordered stretch occupies residues 108–129 (DEQVKPTSSTSSTSTTEEVEIK). A compositionally biased stretch (low complexity) spans 114 to 123 (TSSTSSTSTT). Position 368-371 (368-371 (DLGH)) interacts with ATP. The segment covering 596–650 (NNNNNNNNSSSSSNNNNNNNNSGSNSNINSYNNNNNNNNNNNNNNNNNNNNSFNN) has biased composition (low complexity). A disordered region spans residues 596–701 (NNNNNNNNSS…TSSPTKKLKI (106 aa)). Positions 651-668 (VTIVTSTLNSNSTVPSTL) are enriched in polar residues. The segment covering 669–696 (NSNSTVPSISNSNSTVPSTSTSTTSSPT) has biased composition (low complexity). The stretch at 762-804 (FKQLEQQYQAQQLQFQQQLQQQQQQQQQLQQQLQNSTNSATTT) forms a coiled coil.

The protein belongs to the actin family. ARP8 subfamily. As to quaternary structure, component of the chromatin remodeling INO80 complex. Exists as monomers and dimers, but the dimer is most probably the biologically relevant form required for stable interactions with histones that exploits the twofold symmetry of the nucleosome core.

The protein localises to the nucleus. Its subcellular location is the cytoplasm. The protein resides in the cytoskeleton. Its function is as follows. Plays an important role in the functional organization of mitotic chromosomes. Exhibits low basal ATPase activity, and unable to polymerize. In terms of biological role, proposed core component of the chromatin remodeling INO80 complex which is involved in transcriptional regulation, DNA replication and probably DNA repair. Strongly prefer nucleosomes and H3-H4 tetramers over H2A-H2B dimers, suggesting it may act as a nucleosome recognition module within the complex. The polypeptide is Actin-related protein 8 (Dictyostelium discoideum (Social amoeba)).